Reading from the N-terminus, the 167-residue chain is Small ribosomal subunit protein uS5 (167 aa).

The region spanning 12-75 (LEERVVTINR…EDAKKNMVFV (64 aa)) is the S5 DRBM domain.

This sequence belongs to the universal ribosomal protein uS5 family. In terms of assembly, part of the 30S ribosomal subunit. Contacts proteins S4 and S8.

With S4 and S12 plays an important role in translational accuracy. In terms of biological role, located at the back of the 30S subunit body where it stabilizes the conformation of the head with respect to the body. This is Small ribosomal subunit protein uS5 from Listeria innocua serovar 6a (strain ATCC BAA-680 / CLIP 11262).